A 196-amino-acid chain; its full sequence is GTP cyclohydrolase-2 (196 aa).

49–53 (RVHSE) is a GTP binding site. Zn(2+)-binding residues include Cys-54, Cys-65, and Cys-67. Residues Gln-70, 92–94 (EGR), and Thr-114 contribute to the GTP site. Asp-126 functions as the Proton acceptor in the catalytic mechanism. The active-site Nucleophile is Arg-128. GTP contacts are provided by Thr-149 and Lys-154.

This sequence belongs to the GTP cyclohydrolase II family. Homodimer. Zn(2+) serves as cofactor.

It carries out the reaction GTP + 4 H2O = 2,5-diamino-6-hydroxy-4-(5-phosphoribosylamino)-pyrimidine + formate + 2 phosphate + 3 H(+). Its pathway is cofactor biosynthesis; riboflavin biosynthesis; 5-amino-6-(D-ribitylamino)uracil from GTP: step 1/4. Its function is as follows. Catalyzes the conversion of GTP to 2,5-diamino-6-ribosylamino-4(3H)-pyrimidinone 5'-phosphate (DARP), formate and pyrophosphate. The protein is GTP cyclohydrolase-2 of Citrobacter koseri (strain ATCC BAA-895 / CDC 4225-83 / SGSC4696).